A 527-amino-acid chain; its full sequence is Glucose-6-phosphate isomerase (527 aa).

Residue Glu323 is the Proton donor of the active site. Active-site residues include His352 and Lys454.

The protein belongs to the GPI family.

It is found in the cytoplasm. It catalyses the reaction alpha-D-glucose 6-phosphate = beta-D-fructose 6-phosphate. The protein operates within carbohydrate biosynthesis; gluconeogenesis. Its pathway is carbohydrate degradation; glycolysis; D-glyceraldehyde 3-phosphate and glycerone phosphate from D-glucose: step 2/4. Functionally, catalyzes the reversible isomerization of glucose-6-phosphate to fructose-6-phosphate. The polypeptide is Glucose-6-phosphate isomerase (Prochlorococcus marinus (strain MIT 9215)).